We begin with the raw amino-acid sequence, 491 residues long: Probable cytosol aminopeptidase (491 aa).

Lys261 and Asp266 together coordinate Mn(2+). Residue Lys273 is part of the active site. Mn(2+) is bound by residues Asp284, Asp343, and Glu345. The active site involves Arg347.

It belongs to the peptidase M17 family. The cofactor is Mn(2+).

It localises to the cytoplasm. The catalysed reaction is Release of an N-terminal amino acid, Xaa-|-Yaa-, in which Xaa is preferably Leu, but may be other amino acids including Pro although not Arg or Lys, and Yaa may be Pro. Amino acid amides and methyl esters are also readily hydrolyzed, but rates on arylamides are exceedingly low.. It catalyses the reaction Release of an N-terminal amino acid, preferentially leucine, but not glutamic or aspartic acids.. Functionally, presumably involved in the processing and regular turnover of intracellular proteins. Catalyzes the removal of unsubstituted N-terminal amino acids from various peptides. This chain is Probable cytosol aminopeptidase, found in Stenotrophomonas maltophilia (strain K279a).